The following is a 284-amino-acid chain: Formyltetrahydrofolate deformylase (284 aa).

The ACT domain maps to 7 to 90 (TLLVSCPDQP…QIHFSDQLPR (84 aa)). Residue aspartate 228 is part of the active site.

The protein belongs to the PurU family.

It catalyses the reaction (6R)-10-formyltetrahydrofolate + H2O = (6S)-5,6,7,8-tetrahydrofolate + formate + H(+). Its pathway is purine metabolism; IMP biosynthesis via de novo pathway; formate from 10-formyl-5,6,7,8-tetrahydrofolate: step 1/1. Its function is as follows. Catalyzes the hydrolysis of 10-formyltetrahydrofolate (formyl-FH4) to formate and tetrahydrofolate (FH4). This chain is Formyltetrahydrofolate deformylase, found in Synechocystis sp. (strain ATCC 27184 / PCC 6803 / Kazusa).